We begin with the raw amino-acid sequence, 152 residues long: Large ribosomal subunit protein eL14 (152 aa).

It belongs to the eukaryotic ribosomal protein eL14 family.

This is Large ribosomal subunit protein eL14 (RPL14) from Lumbricus rubellus (Humus earthworm).